Consider the following 224-residue polypeptide: MRLLVVEDEKSIAEAIQALLADKGYSVDLAFDGDDGLEYILTGLYDLVLLDIMLPKRSGLSVLKRVREAGLETPIIFLTAKSQTYDKVNGLDLGADDYITKPFEADELLARIRLRTRQSSLIRANQLRLGNIRLNTDSHELESKESSVKLSNKEFLLMEVFMRNAKQIIPKNQLISKVWGPSDNSEYNQLEVFISFLRKKLRFLKADIEIITTKGFGYSLEERT.

In terms of domain architecture, Response regulatory spans 2 to 116; it reads RLLVVEDEKS…ELLARIRLRT (115 aa). A 4-aspartylphosphate modification is found at Asp-51. The segment at residues 124–222 is a DNA-binding region (ompR/PhoB-type); the sequence is ANQLRLGNIR…TKGFGYSLEE (99 aa).

Phosphorylated by DltS.

It localises to the cytoplasm. In terms of biological role, member of the two-component regulatory system DltS/DltR. Regulates the expression of the dlt operon. The protein is Transcriptional regulatory protein DltR (dltR) of Streptococcus agalactiae serotype III (strain NEM316).